Consider the following 270-residue polypeptide: UPF0354 protein Bcer98_3354 (270 aa).

The protein belongs to the UPF0354 family.

The chain is UPF0354 protein Bcer98_3354 from Bacillus cytotoxicus (strain DSM 22905 / CIP 110041 / 391-98 / NVH 391-98).